The chain runs to 129 residues: Large ribosomal subunit protein bL19 (129 aa).

It belongs to the bacterial ribosomal protein bL19 family.

In terms of biological role, this protein is located at the 30S-50S ribosomal subunit interface and may play a role in the structure and function of the aminoacyl-tRNA binding site. The polypeptide is Large ribosomal subunit protein bL19 (Bordetella avium (strain 197N)).